A 377-amino-acid chain; its full sequence is Succinyl-diaminopimelate desuccinylase (377 aa).

Zn(2+) is bound at residue His-67. The active site involves Asp-69. Asp-100 is a Zn(2+) binding site. Glu-134 (proton acceptor) is an active-site residue. Zn(2+) contacts are provided by Glu-135, Glu-163, and His-349.

It belongs to the peptidase M20A family. DapE subfamily. Homodimer. Zn(2+) serves as cofactor. The cofactor is Co(2+).

The catalysed reaction is N-succinyl-(2S,6S)-2,6-diaminopimelate + H2O = (2S,6S)-2,6-diaminopimelate + succinate. It participates in amino-acid biosynthesis; L-lysine biosynthesis via DAP pathway; LL-2,6-diaminopimelate from (S)-tetrahydrodipicolinate (succinylase route): step 3/3. Its function is as follows. Catalyzes the hydrolysis of N-succinyl-L,L-diaminopimelic acid (SDAP), forming succinate and LL-2,6-diaminopimelate (DAP), an intermediate involved in the bacterial biosynthesis of lysine and meso-diaminopimelic acid, an essential component of bacterial cell walls. This chain is Succinyl-diaminopimelate desuccinylase, found in Dechloromonas aromatica (strain RCB).